The primary structure comprises 560 residues: Glutamine--tRNA ligase (560 aa).

The 'HIGH' region signature appears at 36–46 (PEPNGFAHIGH). ATP contacts are provided by residues 37-39 (EPN) and 43-49 (HIGHAKA). Positions 69 and 214 each coordinate L-glutamine. 263-264 (RL) serves as a coordination point for ATP. Residues 270-274 (LTSKR) carry the 'KMSKS' region motif.

It belongs to the class-I aminoacyl-tRNA synthetase family. Monomer.

Its subcellular location is the cytoplasm. It catalyses the reaction tRNA(Gln) + L-glutamine + ATP = L-glutaminyl-tRNA(Gln) + AMP + diphosphate. The polypeptide is Glutamine--tRNA ligase (Chromobacterium violaceum (strain ATCC 12472 / DSM 30191 / JCM 1249 / CCUG 213 / NBRC 12614 / NCIMB 9131 / NCTC 9757 / MK)).